We begin with the raw amino-acid sequence, 124 residues long: Ribonuclease pancreatic (124 aa).

Residues 1-13 (KETAAAKFERQHM) are compositionally biased toward basic and acidic residues. The interval 1–22 (KETAAAKFERQHMDSSTSAASS) is disordered. Residues Lys-7 and Arg-10 each contribute to the substrate site. The active-site Proton acceptor is His-12. 4 disulfide bridges follow: Cys-26–Cys-84, Cys-40–Cys-95, Cys-58–Cys-110, and Cys-65–Cys-72. N-linked (GlcNAc...) asparagine glycosylation is present at Asn-34. Substrate contacts are provided by residues 41–45 (KPVNT), Lys-66, and Arg-85. Catalysis depends on His-119, which acts as the Proton donor.

The protein belongs to the pancreatic ribonuclease family. In terms of assembly, monomer. Interacts with and forms tight 1:1 complexes with RNH1. Dimerization of two such complexes may occur. Interaction with RNH1 inhibits this protein. Pancreas.

It localises to the secreted. It carries out the reaction an [RNA] containing cytidine + H2O = an [RNA]-3'-cytidine-3'-phosphate + a 5'-hydroxy-ribonucleotide-3'-[RNA].. It catalyses the reaction an [RNA] containing uridine + H2O = an [RNA]-3'-uridine-3'-phosphate + a 5'-hydroxy-ribonucleotide-3'-[RNA].. Functionally, endonuclease that catalyzes the cleavage of RNA on the 3' side of pyrimidine nucleotides. Acts on single-stranded and double-stranded RNA. The protein is Ribonuclease pancreatic (RNASE1) of Bison bison (American bison).